Consider the following 95-residue polypeptide: Large ribosomal subunit protein uL23 (95 aa).

This sequence belongs to the universal ribosomal protein uL23 family. Part of the 50S ribosomal subunit. Contacts protein L29, and trigger factor when it is bound to the ribosome.

Its function is as follows. One of the early assembly proteins it binds 23S rRNA. One of the proteins that surrounds the polypeptide exit tunnel on the outside of the ribosome. Forms the main docking site for trigger factor binding to the ribosome. The protein is Large ribosomal subunit protein uL23 of Bacillus licheniformis (strain ATCC 14580 / DSM 13 / JCM 2505 / CCUG 7422 / NBRC 12200 / NCIMB 9375 / NCTC 10341 / NRRL NRS-1264 / Gibson 46).